The primary structure comprises 420 residues: Protein maelstrom homolog (420 aa).

The segment at residues 4–73 is a DNA-binding region (HMG box); that stretch reads RRASRNAYYF…AQGKDSGPSE (70 aa). 3 disordered regions span residues 62–94, 341–372, and 392–420; these read RAAQ…KQNV, GFSH…GQNS, and NIHK…SSLS. 2 stretches are compositionally biased toward polar residues: residues 344–358 and 392–407; these read HFSS…NTPT and NIHK…SPYT.

It belongs to the maelstrom family. In terms of assembly, interacts with SMARCB1, SIN3B and DDX4. Interacts with piRNA-associated proteins TDRD1, PIWIL1 and PIWIL2. Interacts with TEX19.

The protein resides in the cytoplasm. The protein localises to the nucleus. Functionally, plays a central role during spermatogenesis by repressing transposable elements and preventing their mobilization, which is essential for the germline integrity. Acts via the piRNA metabolic process, which mediates the repression of transposable elements during meiosis by forming complexes composed of piRNAs and Piwi proteins and governs the methylation and subsequent repression of transposons. Its association with piP-bodies suggests a participation in the secondary piRNAs metabolic process. Required for the localization of germ-cell factors to the meiotic nuage. In Bos taurus (Bovine), this protein is Protein maelstrom homolog (MAEL).